The primary structure comprises 295 residues: 4-hydroxy-tetrahydrodipicolinate synthase (295 aa).

A pyruvate-binding site is contributed by T46. Y135 functions as the Proton donor/acceptor in the catalytic mechanism. The active-site Schiff-base intermediate with substrate is the K164. I205 lines the pyruvate pocket.

Belongs to the DapA family. As to quaternary structure, homotetramer; dimer of dimers.

The protein resides in the cytoplasm. It carries out the reaction L-aspartate 4-semialdehyde + pyruvate = (2S,4S)-4-hydroxy-2,3,4,5-tetrahydrodipicolinate + H2O + H(+). It participates in amino-acid biosynthesis; L-lysine biosynthesis via DAP pathway; (S)-tetrahydrodipicolinate from L-aspartate: step 3/4. In terms of biological role, catalyzes the condensation of (S)-aspartate-beta-semialdehyde [(S)-ASA] and pyruvate to 4-hydroxy-tetrahydrodipicolinate (HTPA). The polypeptide is 4-hydroxy-tetrahydrodipicolinate synthase (Wolinella succinogenes (strain ATCC 29543 / DSM 1740 / CCUG 13145 / JCM 31913 / LMG 7466 / NCTC 11488 / FDC 602W) (Vibrio succinogenes)).